Here is a 452-residue protein sequence, read N- to C-terminus: Tubulin alpha-2/alpha-4 chain (452 aa).

Q11 contacts GTP. K40 carries the post-translational modification N6-acetyllysine. Residues E71, S140, G144, T145, T179, N206, and N228 each contribute to the GTP site. E71 provides a ligand contact to Mg(2+). The active site involves E254. The interval 432–452 (YEEVGVDSVEGEGEEEGGEEY) is disordered.

Belongs to the tubulin family. As to quaternary structure, dimer of alpha and beta chains. A typical microtubule is a hollow water-filled tube with an outer diameter of 25 nm and an inner diameter of 15 nM. Alpha-beta heterodimers associate head-to-tail to form protofilaments running lengthwise along the microtubule wall with the beta-tubulin subunit facing the microtubule plus end conferring a structural polarity. Microtubules usually have 13 protofilaments but different protofilament numbers can be found in some organisms and specialized cells. The cofactor is Mg(2+). In terms of processing, undergoes a tyrosination/detyrosination cycle, the cyclic removal and re-addition of a C-terminal tyrosine residue by the enzymes tubulin tyrosine carboxypeptidase (TTCP) and tubulin tyrosine ligase (TTL), respectively. Acetylation of alpha chains at Lys-40 stabilizes microtubules and affects affinity and processivity of microtubule motors. This modification has a role in multiple cellular functions, ranging from cell motility, cell cycle progression or cell differentiation to intracellular trafficking and signaling.

Its subcellular location is the cytoplasm. The protein resides in the cytoskeleton. It carries out the reaction GTP + H2O = GDP + phosphate + H(+). Tubulin is the major constituent of microtubules, a cylinder consisting of laterally associated linear protofilaments composed of alpha- and beta-tubulin heterodimers. Microtubules grow by the addition of GTP-tubulin dimers to the microtubule end, where a stabilizing cap forms. Below the cap, tubulin dimers are in GDP-bound state, owing to GTPase activity of alpha-tubulin. This chain is Tubulin alpha-2/alpha-4 chain (TUB2), found in Patella vulgata (Common limpet).